The sequence spans 156 residues: ATP synthase subunit b (156 aa).

Residues 4–26 (GATFWGPMISFALFVWFTMKFVW) form a helical membrane-spanning segment.

This sequence belongs to the ATPase B chain family. F-type ATPases have 2 components, F(1) - the catalytic core - and F(0) - the membrane proton channel. F(1) has five subunits: alpha(3), beta(3), gamma(1), delta(1), epsilon(1). F(0) has three main subunits: a(1), b(2) and c(10-14). The alpha and beta chains form an alternating ring which encloses part of the gamma chain. F(1) is attached to F(0) by a central stalk formed by the gamma and epsilon chains, while a peripheral stalk is formed by the delta and b chains.

The protein resides in the cell inner membrane. F(1)F(0) ATP synthase produces ATP from ADP in the presence of a proton or sodium gradient. F-type ATPases consist of two structural domains, F(1) containing the extramembraneous catalytic core and F(0) containing the membrane proton channel, linked together by a central stalk and a peripheral stalk. During catalysis, ATP synthesis in the catalytic domain of F(1) is coupled via a rotary mechanism of the central stalk subunits to proton translocation. Functionally, component of the F(0) channel, it forms part of the peripheral stalk, linking F(1) to F(0). The sequence is that of ATP synthase subunit b from Halorhodospira halophila (strain DSM 244 / SL1) (Ectothiorhodospira halophila (strain DSM 244 / SL1)).